We begin with the raw amino-acid sequence, 63 residues long: Large ribosomal subunit protein eL37 (63 aa).

The Zn(2+) site is built by Cys-20, Cys-23, Cys-35, and Cys-38. A C4-type zinc finger spans residues 20 to 38 (CRRCGRRAFNVKKGYCAAC).

It belongs to the eukaryotic ribosomal protein eL37 family. The cofactor is Zn(2+).

Functionally, binds to the 23S rRNA. The polypeptide is Large ribosomal subunit protein eL37 (Thermococcus gammatolerans (strain DSM 15229 / JCM 11827 / EJ3)).